We begin with the raw amino-acid sequence, 149 residues long: NADH-ubiquinone oxidoreductase chain 6 (149 aa).

The next 4 membrane-spanning stretches (helical) occupy residues 23 to 43 (ILML…FYFI), 51 to 71 (MMMI…MISL), 83 to 103 (LSVT…MTKL), and 114 to 134 (VNFV…LTII).

It belongs to the complex I subunit 6 family.

The protein resides in the mitochondrion membrane. The enzyme catalyses a ubiquinone + NADH + 5 H(+)(in) = a ubiquinol + NAD(+) + 4 H(+)(out). Functionally, core subunit of the mitochondrial membrane respiratory chain NADH dehydrogenase (Complex I) that is believed to belong to the minimal assembly required for catalysis. Complex I functions in the transfer of electrons from NADH to the respiratory chain. The immediate electron acceptor for the enzyme is believed to be ubiquinone. The protein is NADH-ubiquinone oxidoreductase chain 6 (ND6) of Rhipicephalus sanguineus (Brown dog tick).